The sequence spans 376 residues: Putative F-box protein At1g53370 (376 aa).

An F-box domain is found at 22 to 71; it reads RNYIDSIPVDLLIDILSRFPPKSIARFYCVSKLWESILRGPDFTELYLTK.

This is Putative F-box protein At1g53370 from Arabidopsis thaliana (Mouse-ear cress).